Reading from the N-terminus, the 336-residue chain is tRNA N6-adenosine threonylcarbamoyltransferase (336 aa).

Fe cation contacts are provided by histidine 111 and histidine 115. Substrate-binding positions include 134 to 138 (VVSGG), aspartate 167, glycine 180, aspartate 184, and asparagine 272. Residue aspartate 300 participates in Fe cation binding.

It belongs to the KAE1 / TsaD family. Fe(2+) serves as cofactor.

It is found in the cytoplasm. The enzyme catalyses L-threonylcarbamoyladenylate + adenosine(37) in tRNA = N(6)-L-threonylcarbamoyladenosine(37) in tRNA + AMP + H(+). Its function is as follows. Required for the formation of a threonylcarbamoyl group on adenosine at position 37 (t(6)A37) in tRNAs that read codons beginning with adenine. Is involved in the transfer of the threonylcarbamoyl moiety of threonylcarbamoyl-AMP (TC-AMP) to the N6 group of A37, together with TsaE and TsaB. TsaD likely plays a direct catalytic role in this reaction. The sequence is that of tRNA N6-adenosine threonylcarbamoyltransferase from Caldicellulosiruptor saccharolyticus (strain ATCC 43494 / DSM 8903 / Tp8T 6331).